A 140-amino-acid chain; its full sequence is uncharacterized protein (140 aa).

The protein resides in the mitochondrion. This is an uncharacterized protein from Homo sapiens (Human).